A 431-amino-acid polypeptide reads, in one-letter code: Glutamyl-tRNA(Gln) amidotransferase subunit A (431 aa).

Catalysis depends on charge relay system residues Lys-55 and Ser-130. Ser-154 serves as the catalytic Acyl-ester intermediate.

The protein belongs to the amidase family. GatA subfamily. As to quaternary structure, heterotrimer of A, B and C subunits.

The catalysed reaction is L-glutamyl-tRNA(Gln) + L-glutamine + ATP + H2O = L-glutaminyl-tRNA(Gln) + L-glutamate + ADP + phosphate + H(+). Functionally, allows the formation of correctly charged Gln-tRNA(Gln) through the transamidation of misacylated Glu-tRNA(Gln) in organisms which lack glutaminyl-tRNA synthetase. The reaction takes place in the presence of glutamine and ATP through an activated gamma-phospho-Glu-tRNA(Gln). In Methanococcus maripaludis (strain C5 / ATCC BAA-1333), this protein is Glutamyl-tRNA(Gln) amidotransferase subunit A.